Consider the following 285-residue polypeptide: Steroidogenic acute regulatory protein, mitochondrial (285 aa).

The N-terminal 63 residues, methionine 1 to leucine 63, are a transit peptide targeting the mitochondrion. Serine 57 and serine 195 each carry phosphoserine; by PKA. The START domain maps to leucine 67–alanine 280.

As to quaternary structure, may interact with TSPO.

Its subcellular location is the mitochondrion. It catalyses the reaction cholesterol(in) = cholesterol(out). Its pathway is steroid metabolism; cholesterol metabolism. Functionally, plays a key role in steroid hormone synthesis by enhancing the metabolism of cholesterol into pregnenolone. Mediates the transfer of cholesterol from the outer mitochondrial membrane to the inner mitochondrial membrane where it is cleaved to pregnenolone. The protein is Steroidogenic acute regulatory protein, mitochondrial (STAR) of Equus caballus (Horse).